The primary structure comprises 131 residues: Large ribosomal subunit protein bL12c (131 aa).

Belongs to the bacterial ribosomal protein bL12 family. Homodimer. Part of the ribosomal stalk of the 50S ribosomal subunit. Forms a multimeric L10(L12)X complex, where L10 forms an elongated spine to which 2 to 4 L12 dimers bind in a sequential fashion. Binds GTP-bound translation factors.

It localises to the plastid. It is found in the chloroplast. Its function is as follows. Forms part of the ribosomal stalk which helps the ribosome interact with GTP-bound translation factors. Is thus essential for accurate translation. The polypeptide is Large ribosomal subunit protein bL12c (Euglena gracilis).